Here is a 438-residue protein sequence, read N- to C-terminus: Glycosyl hydrolase family 109 protein (438 aa).

Positions 1–33 (MDKTSRRDLLKLASLAGIGAGLARSQGSSKSMA) form a signal peptide, tat-type signal. Residues 52 to 53 (GR), aspartate 74, 125 to 128 (WVWH), 145 to 146 (EV), and asparagine 174 contribute to the NAD(+) site. Substrate is bound by residues tyrosine 203, arginine 221, 233 to 236 (YPTH), and tyrosine 315. An NAD(+)-binding site is contributed by tyrosine 233. Residues 408 to 438 (GPLSEASVANGSAPQKFPDFTRGKWQTRQPV) are disordered.

It belongs to the Gfo/Idh/MocA family. Glycosyl hydrolase 109 subfamily. The cofactor is NAD(+). In terms of processing, predicted to be exported by the Tat system. The position of the signal peptide cleavage has not been experimentally proven.

Functionally, glycosidase. The sequence is that of Glycosyl hydrolase family 109 protein from Solibacter usitatus (strain Ellin6076).